We begin with the raw amino-acid sequence, 1178 residues long: Pyruvate carboxylase, mitochondrial (1178 aa).

Residues 1–20 (MLKFQTVRGGLRLLGVRRSS) constitute a mitochondrion transit peptide. Residues Lys-35 and Lys-39 each carry the N6-acetyllysine modification. The Biotin carboxylation domain occupies 36–486 (PIKKVMVANR…DTQFIDENPE (451 aa)). Lys-79 is subject to N6-acetyllysine; alternate. N6-succinyllysine; alternate is present on Lys-79. N6-acetyllysine is present on residues Lys-148 and Lys-152. Lys-152 and Glu-236 together coordinate ATP. In terms of domain architecture, ATP-grasp spans 156–353 (RAIAIAAGVP…LVHAQIHVSE (198 aa)). The residue at position 241 (Lys-241) is an N6-acetyllysine. His-271 provides a ligand contact to ATP. Lys-297, Lys-316, and Lys-319 each carry N6-acetyllysine. Arg-328 is a catalytic residue. Lys-434 is subject to N6-acetyllysine. Lys-442 carries the N6-succinyllysine modification. Residues 563 to 832 (LLLMDTTFRD…DTEVPLERVF (270 aa)) form the Pyruvate carboxyltransferase domain. A substrate-binding site is contributed by 571–575 (RDAHQ). Asp-572 lines the Mn(2+) pocket. At Lys-589 the chain carries N6-acetyllysine. Residue Arg-644 participates in substrate binding. Lys-661 and Lys-717 each carry N6-acetyllysine. A Mn(2+)-binding site is contributed by Lys-741. N6-carboxylysine is present on Lys-741. Lys-748 bears the N6-acetyllysine mark. Mn(2+) is bound by residues His-771 and His-773. Residue Lys-892 is modified to N6-acetyllysine. A substrate-binding site is contributed by Thr-908. An N6-acetyllysine modification is found at Lys-969. The residue at position 988 (Lys-988) is an N6-acetyllysine; alternate. Position 988 is an N6-succinyllysine; alternate (Lys-988). Residue Lys-992 is modified to N6-acetyllysine. At Thr-1003 the chain carries Phosphothreonine. N6-acetyllysine is present on residues Lys-1061, Lys-1090, and Lys-1124. The Biotinyl-binding domain maps to 1109 to 1178 (KGQIGAPMPG…EGDDLILEIE (70 aa)). Lys-1144 bears the N6-biotinyllysine mark.

As to quaternary structure, homotetramer. Interacts (via the biotin carboxylation domain) with SIRT4. Biotin serves as cofactor. Requires Mn(2+) as cofactor. In terms of processing, acetylation of Lys-748 might play a role in catalytic activity regulation.

The protein localises to the mitochondrion matrix. The enzyme catalyses hydrogencarbonate + pyruvate + ATP = oxaloacetate + ADP + phosphate + H(+). Its pathway is carbohydrate biosynthesis; gluconeogenesis. Pyruvate carboxylase catalyzes a 2-step reaction, involving the ATP-dependent carboxylation of the covalently attached biotin in the first step and the transfer of the carboxyl group to pyruvate in the second. Catalyzes in a tissue specific manner, the initial reactions of glucose (liver, kidney) and lipid (adipose tissue, liver, brain) synthesis from pyruvate. The polypeptide is Pyruvate carboxylase, mitochondrial (Pc) (Rattus norvegicus (Rat)).